The primary structure comprises 232 residues: Dephospho-CoA kinase (232 aa).

The DPCK domain maps to 3–206 (IVGLTGGIAS…RPLTWIEFWR (204 aa)). 8 to 15 (GGIASGKS) is an ATP binding site.

Belongs to the CoaE family.

It localises to the peroxisome. It catalyses the reaction 3'-dephospho-CoA + ATP = ADP + CoA + H(+). It functions in the pathway cofactor biosynthesis; coenzyme A biosynthesis; CoA from (R)-pantothenate: step 5/5. Catalyzes the phosphorylation of the 3'-hydroxyl group of dephosphocoenzyme A to form coenzyme A. The polypeptide is Dephospho-CoA kinase (Arabidopsis thaliana (Mouse-ear cress)).